We begin with the raw amino-acid sequence, 391 residues long: Tyrosine recombinase XerC-like (391 aa).

In terms of domain architecture, Core-binding (CB) spans 64 to 148; sequence VTLGDLMHTW…FLKTFFNYAV (85 aa). The Tyr recombinase domain maps to 175–384; sequence TEIETFSDEE…IPKQKTNAVE (210 aa). Active-site residues include R210, K244, H335, R338, and H361. Y371 functions as the O-(3'-phospho-DNA)-tyrosine intermediate in the catalytic mechanism.

It belongs to the 'phage' integrase family.

It localises to the cytoplasm. Site-specific tyrosine recombinase, which acts by catalyzing the cutting and rejoining of the recombining DNA molecules. The protein is Tyrosine recombinase XerC-like of Caldanaerobacter subterraneus subsp. tengcongensis (strain DSM 15242 / JCM 11007 / NBRC 100824 / MB4) (Thermoanaerobacter tengcongensis).